A 180-amino-acid polypeptide reads, in one-letter code: Type-1 fimbrial protein, C chain (180 aa).

The first 23 residues, 1 to 23, serve as a signal peptide directing secretion; sequence MKLKFISMAVFSALTLGVATNAS. A disulfide bond links cysteine 44 and cysteine 84.

This sequence belongs to the fimbrial protein family.

Its subcellular location is the fimbrium. Functionally, fimbriae (also called pili), polar filaments radiating from the surface of the bacterium to a length of 0.5-1.5 micrometers and numbering 100-300 per cell, enable bacteria to colonize the epithelium of specific host organs. This is Type-1 fimbrial protein, C chain (pilC) from Escherichia coli O6:H1 (strain CFT073 / ATCC 700928 / UPEC).